A 771-amino-acid polypeptide reads, in one-letter code: DnaJ homolog subfamily C member 16 (771 aa).

The N-terminal stretch at 1–25 is a signal peptide; sequence MELKRLSISWQFLIVLVLILQSLSA. Over 26-532 the chain is Cytoplasmic; it reads LDFDPYRVLG…ESLLHSNWRE (507 aa). The J domain occupies 29 to 93; it reads DPYRVLGVSR…EKRTNYDHYG (65 aa). The Thioredoxin domain maps to 116-244; sequence FYFDESFFHF…LRQFVESLLP (129 aa). Residues 533 to 553 form a helical; Anchor for type IV membrane protein membrane-spanning segment; it reads MMPLLSLIFSALFILFGTVIV. The Extracellular segment spans residues 554–771; sequence QAFSDSNEER…FYIPSWPELD (218 aa). Residues 559 to 590 are disordered; sequence SNEERESHPPDKEEVPEKAGKTEPSFTKESSS. The span at 560-579 shows a compositional bias: basic and acidic residues; it reads NEERESHPPDKEEVPEKAGK. Residue asparagine 628 is glycosylated (N-linked (GlcNAc...) asparagine).

Its subcellular location is the endoplasmic reticulum membrane. Plays an important role in regulating the size of autophagosomes during the formation process. The sequence is that of DnaJ homolog subfamily C member 16 (Dnajc16) from Rattus norvegicus (Rat).